We begin with the raw amino-acid sequence, 622 residues long: Cilia- and flagella-associated protein 206 (622 aa).

Residues 571-592 are disordered; that stretch reads QVYPPKDTSTQSMREDSTGVPR.

This sequence belongs to the CFAP206 family.

The protein resides in the cytoplasm. It localises to the cytoskeleton. It is found in the cilium axoneme. The protein localises to the cilium basal body. In terms of biological role, essential for sperm motility and is involved in the regulation of the beating frequency of motile cilia on the epithelial cells of the respiratory tract. Required for the establishment of radial spokes in sperm flagella. This chain is Cilia- and flagella-associated protein 206, found in Macaca fascicularis (Crab-eating macaque).